Consider the following 212-residue polypeptide: Peptide methionine sulfoxide reductase MsrA (212 aa).

The span at 1–14 (MNSIDKTQRITQSD) shows a compositional bias: polar residues. Residues 1 to 21 (MNSIDKTQRITQSDALPGRST) form a disordered region. Cys-52 is a catalytic residue.

Belongs to the MsrA Met sulfoxide reductase family.

The enzyme catalyses L-methionyl-[protein] + [thioredoxin]-disulfide + H2O = L-methionyl-(S)-S-oxide-[protein] + [thioredoxin]-dithiol. It catalyses the reaction [thioredoxin]-disulfide + L-methionine + H2O = L-methionine (S)-S-oxide + [thioredoxin]-dithiol. In terms of biological role, has an important function as a repair enzyme for proteins that have been inactivated by oxidation. Catalyzes the reversible oxidation-reduction of methionine sulfoxide in proteins to methionine. In Pectobacterium atrosepticum (strain SCRI 1043 / ATCC BAA-672) (Erwinia carotovora subsp. atroseptica), this protein is Peptide methionine sulfoxide reductase MsrA.